Here is a 206-residue protein sequence, read N- to C-terminus: Large ribosomal subunit protein uL4 (206 aa).

The interval 55-80 (AFVSGGGAKPWRQKGTGRARSGSNRS) is disordered.

Belongs to the universal ribosomal protein uL4 family. As to quaternary structure, part of the 50S ribosomal subunit.

In terms of biological role, one of the primary rRNA binding proteins, this protein initially binds near the 5'-end of the 23S rRNA. It is important during the early stages of 50S assembly. It makes multiple contacts with different domains of the 23S rRNA in the assembled 50S subunit and ribosome. Forms part of the polypeptide exit tunnel. The protein is Large ribosomal subunit protein uL4 of Nitratidesulfovibrio vulgaris (strain DSM 19637 / Miyazaki F) (Desulfovibrio vulgaris).